A 499-amino-acid polypeptide reads, in one-letter code: MTIHIKNNVNWVGQRDWEVSDFHGTEFKMTKGTSYNSYLIQEEKTILIDTVDHRFSHQFIQNLEMEIDLTSIDYIVINHAEEDHAGALAALMEKIPGTPIYCTENAIDSIVGHHHHPEWNFKPIKTGDALDIGNGKQLVFVEAPMLHWPDSMMTYLTGDAILFSNDAFGQHYCDERLFNDEVDQTELMDQCLRYYANILTPFSALVTAKIKEVLSFNLPVDMIATSHGCVWRDNPTQIIHQYLEWADNYQEDRITLFYDSMSNNTRMMADAIAQGIHDVDPGVAVKVFNVSRQDKNDILTSVFRSKGILVGSSTMNNVMMPKIAGMLEEITGLRFRAKKAGAFGSYGWNGGAVDRIHSRLTDAGFETAVGLKAKWRPDGKAMQLCREHGQFIAKQWALKPVTTTFQTINVEKKTIPASIAEPVIMVDPSVSSTVESEISVIASNDDKQCMLCTVCNWVYDPEIGEPNQGVEPNTAWIDVPDYFLCPECNLGKDVFVEVK.

The interval 30 to 210 (TKGTSYNSYL…PFSALVTAKI (181 aa)) is zinc metallo-hydrolase. The Fe cation site is built by histidine 79, glutamate 81, aspartate 83, histidine 147, aspartate 166, and histidine 227. The 140-residue stretch at 254–393 (ITLFYDSMSN…LCREHGQFIA (140 aa)) folds into the Flavodoxin-like domain. Residues 260 to 264 (SMSNN) and 342 to 369 (AFGS…ETAV) each bind FMN. A Rubredoxin-like domain is found at 447–498 (KQCMLCTVCNWVYDPEIGEPNQGVEPNTAWIDVPDYFLCPECNLGKDVFVEV). Positions 452, 455, 485, and 488 each coordinate Fe cation.

It in the N-terminal section; belongs to the zinc metallo-hydrolase group 3 family. Homotetramer. Requires Fe cation as cofactor. FMN is required as a cofactor.

The protein resides in the cytoplasm. Its pathway is nitrogen metabolism; nitric oxide reduction. In terms of biological role, anaerobic nitric oxide reductase; uses NADH to detoxify nitric oxide (NO), protecting several 4Fe-4S NO-sensitive enzymes. Has at least 2 reductase partners, only one of which (NorW, flavorubredoxin reductase) has been identified. NO probably binds to the di-iron center; electrons enter from the NorW at rubredoxin and are transferred sequentially to the FMN center and the di-iron center. Also able to function as an aerobic oxygen reductase. This chain is Anaerobic nitric oxide reductase flavorubredoxin, found in Aliivibrio salmonicida (strain LFI1238) (Vibrio salmonicida (strain LFI1238)).